We begin with the raw amino-acid sequence, 350 residues long: S-adenosylmethionine:tRNA ribosyltransferase-isomerase (350 aa).

This sequence belongs to the QueA family. In terms of assembly, monomer.

Its subcellular location is the cytoplasm. It carries out the reaction 7-aminomethyl-7-carbaguanosine(34) in tRNA + S-adenosyl-L-methionine = epoxyqueuosine(34) in tRNA + adenine + L-methionine + 2 H(+). It functions in the pathway tRNA modification; tRNA-queuosine biosynthesis. Its function is as follows. Transfers and isomerizes the ribose moiety from AdoMet to the 7-aminomethyl group of 7-deazaguanine (preQ1-tRNA) to give epoxyqueuosine (oQ-tRNA). In Vibrio parahaemolyticus serotype O3:K6 (strain RIMD 2210633), this protein is S-adenosylmethionine:tRNA ribosyltransferase-isomerase.